Consider the following 231-residue polypeptide: Ribose-5-phosphate isomerase A (231 aa).

Substrate-binding positions include Thr31–Thr34, Asp86–Asp89, and Lys100–Gly103. The active-site Proton acceptor is the Glu109. Substrate is bound at residue Lys127.

It belongs to the ribose 5-phosphate isomerase family. As to quaternary structure, homodimer.

It catalyses the reaction aldehydo-D-ribose 5-phosphate = D-ribulose 5-phosphate. Its pathway is carbohydrate degradation; pentose phosphate pathway; D-ribose 5-phosphate from D-ribulose 5-phosphate (non-oxidative stage): step 1/1. Catalyzes the reversible conversion of ribose-5-phosphate to ribulose 5-phosphate. The protein is Ribose-5-phosphate isomerase A of Gluconobacter oxydans (strain 621H) (Gluconobacter suboxydans).